The primary structure comprises 434 residues: MNNKDDLFIQKILITGGAGFIGSHLAIYLTKKFKNSKIIVLDKLDYCSNINNLGCVLKELNFKFYKGNILDSELLENIFEKEKIDIVIHLAAYTHVDNSFKQSIKFTENNILGTHYLLETCKNYKLKKFIYVSTDEVYGSGLIEDNDDNNNSINQSSNEKSILNPTNPYSASKAGAEHLVQSYYKSFKLPVIITRANNIYGPKQYPEKIIPKFINLLLNNKKCTIHGTGKNTRNYLYIDDIVSAFDIILRKGEIGNVYNIGTDFEISNLDVAKKIINISINLNNNNNNNNNNNNNNNNNNNNNNNNNNNDFNIMDYKKFINYIDDRPFNDHRYNINYSKLSNLGWKKSISWEEGIEKTFIWYKNNRNYWLNLNVDSYENINNDNNFKYFGNQNNNNENNNNDNNENNNNCRVCSNIDLNYGEKKPFHLTLKSEE.

Substrate is bound at residue Thr134. Catalysis depends on Asp135, which acts as the Proton donor. Residues Glu136 and Tyr169 each act as proton acceptor in the active site. Positions 286-309 are enriched in low complexity; it reads NNNNNNNNNNNNNNNNNNNNNNNN. The tract at residues 286-310 is disordered; sequence NNNNNNNNNNNNNNNNNNNNNNNND.

The protein belongs to the NAD(P)-dependent epimerase/dehydratase family. dTDP-glucose dehydratase subfamily. The cofactor is NAD(+).

The enzyme catalyses dTDP-alpha-D-glucose = dTDP-4-dehydro-6-deoxy-alpha-D-glucose + H2O. The chain is dTDP-D-glucose 4,6-dehydratase (tgds) from Dictyostelium discoideum (Social amoeba).